The sequence spans 72 residues: Translation initiation factor IF-1 (72 aa).

The 72-residue stretch at 1-72 (MAKEDNIEMQ…TKGRIVFRAR (72 aa)) folds into the S1-like domain.

This sequence belongs to the IF-1 family. As to quaternary structure, component of the 30S ribosomal translation pre-initiation complex which assembles on the 30S ribosome in the order IF-2 and IF-3, IF-1 and N-formylmethionyl-tRNA(fMet); mRNA recruitment can occur at any time during PIC assembly.

Its subcellular location is the cytoplasm. In terms of biological role, one of the essential components for the initiation of protein synthesis. Stabilizes the binding of IF-2 and IF-3 on the 30S subunit to which N-formylmethionyl-tRNA(fMet) subsequently binds. Helps modulate mRNA selection, yielding the 30S pre-initiation complex (PIC). Upon addition of the 50S ribosomal subunit IF-1, IF-2 and IF-3 are released leaving the mature 70S translation initiation complex. In Shewanella baltica (strain OS155 / ATCC BAA-1091), this protein is Translation initiation factor IF-1.